Reading from the N-terminus, the 185-residue chain is Elongation factor P (185 aa).

Belongs to the elongation factor P family.

The protein resides in the cytoplasm. It participates in protein biosynthesis; polypeptide chain elongation. Involved in peptide bond synthesis. Stimulates efficient translation and peptide-bond synthesis on native or reconstituted 70S ribosomes in vitro. Probably functions indirectly by altering the affinity of the ribosome for aminoacyl-tRNA, thus increasing their reactivity as acceptors for peptidyl transferase. This chain is Elongation factor P, found in Picosynechococcus sp. (strain ATCC 27264 / PCC 7002 / PR-6) (Agmenellum quadruplicatum).